Here is a 3987-residue protein sequence, read N- to C-terminus: Hybrid PKS-NRPS synthetase buaA (3987 aa).

In terms of domain architecture, Ketosynthase family 3 (KS3) spans 5–438; the sequence is NEPIAIVGSG…GANAHAIVES (434 aa). Catalysis depends on for beta-ketoacyl synthase activity residues Cys-176, His-315, and His-358. The tract at residues 546 to 872 is malonyl-CoA:ACP transacylase (MAT) domain; sequence VFTGQGAQWP…RNADDVESFS (327 aa). Residues 939–1072 are N-terminal hotdog fold; it reads HELLGVRVDS…GAVRLQLGAA (134 aa). The PKS/mFAS DH domain occupies 939–1240; that stretch reads HELLGVRVDS…VAPLVPVTQS (302 aa). The tract at residues 940 to 1238 is dehydratase (DH) domain; sequence ELLGVRVDSL…LQVAPLVPVT (299 aa). The active-site Proton acceptor; for dehydratase activity is the His-970. The interval 1087–1240 is C-terminal hotdog fold; that stretch reads MNDVNIEHFY…VAPLVPVTQS (154 aa). The active-site Proton donor; for dehydratase activity is the Asp-1147. Residues 1399–1583 are methyltransferase (MT) domain; that stretch reads YLANLVKQLS…TSTPSHDVFM (185 aa). A ketoreductase (KR) domain region spans residues 2113-2285; sequence TYLLVGLTGE…LPGSVMNLAG (173 aa). One can recognise a Carrier 1 domain in the interval 2397 to 2473; that stretch reads RVLTNGLILT…AMVEDTMERM (77 aa). The residue at position 2433 (Ser-2433) is an O-(pantetheine 4'-phosphoryl)serine. Residues 2489 to 2561 are disordered; it reads AADRPSAPSD…PPPSSVMSED (73 aa). Positions 2514–2525 are enriched in basic and acidic residues; the sequence is HNSEEQESHAME. The segment covering 2532–2550 has biased composition (low complexity); the sequence is STTSGGECSSTKESSSSEA. The condensation (C) domain stretch occupies residues 2582–3001; it reads MGYGSLQFFF…QLVKMCAYME (420 aa). Residues 3042 to 3448 form an adenylation (A) (KR) domain region; the sequence is LDVAQARPEA…GQLYYEGRIA (407 aa). The region spanning 3564–3644 is the Carrier 2 domain; sequence ADLSETELAL…AMALKIRNSQ (81 aa). Ser-3604 is modified (O-(pantetheine 4'-phosphoryl)serine). Residues 3680-3916 are reductase (R) domain; sequence TVVLTGATGY…TGIAAAAVGA (237 aa).

In the C-terminal section; belongs to the NRP synthetase family.

Its pathway is mycotoxin biosynthesis. In terms of biological role, hybrid PKS-NRPS synthetase; part of the gene cluster that mediates the biosynthesis of burnettramic acids, an unusual class of bolaamphiphilic pyrrolizidinediones that display potent antibacterial, antifungal, and cytotoxic activities. The first step of the biosynthesis of burnettramic acids is the hydroxylation of proline by the proline hydroxylase buaE to generate 4-hydroxyproline. The PKS-NRPS buaA and trans-enoyl reductase buaC construct the highly reduced polyketide chain, and the condensation (C) domain of buaA then catalyzes the amide bond formation with the activated 4-hydroxyproline. This is followed by the R domain releasing the nascent polyketide-peptide directly via a Dieckmann condensation to afford a tetramic acid fused to the hydroxyproline, generating the bicyclic pyrrolidinedione moiety. The cytochrome P450 monooxygenases buaD and buaG are likely responsible for the multiple hydroxylations on the polyketide chain and its terminus, although in a heterologous context, buaD does not appear to be required. Therefore, while buaG may be a multifunctional cytochrome P450 monooxygenase, it cannot be ruled out that the two secondary alcohols on the polyketide chain could have an acetate origin. Finally, the glycosyltransferase buaB transfers beta-D-mannose to the aglycone burnettramic acid A to form burnettramic acid A. Burnettramic acid B is a minor cis-pyrrolizidine epimer of burnettramic acid A and it is likely that small amounts of it form naturally in acidic environments. The polypeptide is Hybrid PKS-NRPS synthetase buaA (Petromyces alliaceus (Aspergillus alliaceus)).